A 477-amino-acid polypeptide reads, in one-letter code: 3-isopropylmalate dehydratase large subunit (477 aa).

Residues Cys347, Cys407, and Cys410 each coordinate [4Fe-4S] cluster. The disordered stretch occupies residues 418 to 442 (LAPGERSASTSNRNFEGRQGKGGRT).

This sequence belongs to the aconitase/IPM isomerase family. LeuC type 1 subfamily. In terms of assembly, heterodimer of LeuC and LeuD. The cofactor is [4Fe-4S] cluster.

The enzyme catalyses (2R,3S)-3-isopropylmalate = (2S)-2-isopropylmalate. It participates in amino-acid biosynthesis; L-leucine biosynthesis; L-leucine from 3-methyl-2-oxobutanoate: step 2/4. Functionally, catalyzes the isomerization between 2-isopropylmalate and 3-isopropylmalate, via the formation of 2-isopropylmaleate. In Streptomyces avermitilis (strain ATCC 31267 / DSM 46492 / JCM 5070 / NBRC 14893 / NCIMB 12804 / NRRL 8165 / MA-4680), this protein is 3-isopropylmalate dehydratase large subunit.